A 144-amino-acid polypeptide reads, in one-letter code: Eukaryotic translation initiation factor 1A, Y-chromosomal (144 aa).

Over residues 1-15 the composition is skewed to basic residues; the sequence is MPKNKGKGGKNRRRG. The tract at residues 1–26 is disordered; the sequence is MPKNKGKGGKNRRRGKNENESEKREL. Basic and acidic residues predominate over residues 16 to 26; the sequence is KNENESEKREL. In terms of domain architecture, S1-like spans 22 to 96; sequence EKRELVFKED…NKADVILKYN (75 aa). Lys-88 participates in a covalent cross-link: Glycyl lysine isopeptide (Lys-Gly) (interchain with G-Cter in ubiquitin). Residues 114–144 form a disordered region; it reads KINETDTFGPGDDDEVQFDDIGDDDEDIDDI. A compositionally biased stretch (acidic residues) spans 124-144; the sequence is GDDDEVQFDDIGDDDEDIDDI.

The protein belongs to the eIF-1A family. As to quaternary structure, component of the 43S pre-initiation complex (43S PIC), which is composed of the 40S ribosomal subunit, EIF1, eIF1A (EIF1AX), eIF3 complex, EIF5 and eIF2-GTP-initiator tRNA complex (eIF2 ternary complex). Interacts with EIF5; this interaction contributes to the maintenance of EIF1 within the open 43S PIC. Interacts through its C-terminal domain (CTD) with the CTD of EIF5B; from the location of the start codon by the 43S complex until the formation of the 80S complex. As to expression, ubiquitous.

It localises to the cytoplasm. Functionally, component of the 43S pre-initiation complex (43S PIC), which binds to the mRNA cap-proximal region, scans mRNA 5'-untranslated region, and locates the initiation codon. This protein enhances formation of the cap-proximal complex. Together with EIF1, facilitates scanning, start codon recognition, promotion of the assembly of 48S complex at the initiation codon (43S PIC becomes 48S PIC after the start codon is reached), and dissociation of aberrant complexes. After start codon location, together with EIF5B orients the initiator methionine-tRNA in a conformation that allows 60S ribosomal subunit joining to form the 80S initiation complex. Is released after 80S initiation complex formation, just after GTP hydrolysis by EIF5B, and before release of EIF5B. Its globular part is located in the A site of the 40S ribosomal subunit. Its interaction with EIF5 during scanning contribute to the maintenance of EIF1 within the open 43S PIC. In contrast to yeast orthologs, does not bind EIF1. The sequence is that of Eukaryotic translation initiation factor 1A, Y-chromosomal (EIF1AY) from Pan troglodytes (Chimpanzee).